The sequence spans 813 residues: Homeobox-leucine zipper protein ROC4 (813 aa).

Positions 62–112 (EVENEMSRSGSDHLDVVSCGDAGGGGGDDDDDEDAEHGNPPKRKKRYHRHT) are disordered. Residues 101 to 112 (PPKRKKRYHRHT) are compositionally biased toward basic residues. Residues 104–163 (RKKRYHRHTPQQIQELEAMFKECPHPDEKQRAELSKRLGLEPRQVKFWFQNRRTQMKMQL) constitute a DNA-binding region (homeobox). Positions 152–191 (FQNRRTQMKMQLERHENSLLKQENDKLRSENLSIREATSN) form a coiled coil. In terms of domain architecture, START spans 306–559 (AGIDKSLFLE…LQRQCECLAL (254 aa)).

The protein belongs to the HD-ZIP homeobox family. Class IV subfamily.

The protein resides in the nucleus. In terms of biological role, probable transcription factor. This is Homeobox-leucine zipper protein ROC4 (ROC4) from Oryza sativa subsp. japonica (Rice).